The sequence spans 288 residues: ATP phosphoribosyltransferase (288 aa).

It belongs to the ATP phosphoribosyltransferase family. Long subfamily. It depends on Mg(2+) as a cofactor.

The protein localises to the cytoplasm. It carries out the reaction 1-(5-phospho-beta-D-ribosyl)-ATP + diphosphate = 5-phospho-alpha-D-ribose 1-diphosphate + ATP. It functions in the pathway amino-acid biosynthesis; L-histidine biosynthesis; L-histidine from 5-phospho-alpha-D-ribose 1-diphosphate: step 1/9. Its activity is regulated as follows. Feedback inhibited by histidine. Its function is as follows. Catalyzes the condensation of ATP and 5-phosphoribose 1-diphosphate to form N'-(5'-phosphoribosyl)-ATP (PR-ATP). Has a crucial role in the pathway because the rate of histidine biosynthesis seems to be controlled primarily by regulation of HisG enzymatic activity. This Methanococcus maripaludis (strain C5 / ATCC BAA-1333) protein is ATP phosphoribosyltransferase.